The chain runs to 504 residues: Hexose transporter 1 (504 aa).

The Cytoplasmic segment spans residues 1–29 (MTKSSKDICSENEGKKNGKSGFFSTSFKY). A helical membrane pass occupies residues 30–50 (VLSACIASFIFGYQVSVLNTI). The Extracellular portion of the chain corresponds to 51 to 78 (KNFIVVEFEWCKGEKDRLNCSNNTIQSS). A disulfide bond links C61 and C70. The chain crosses the membrane as a helical span at residues 79-99 (FLLASVFIGAVLGCGFSGYLV). Residues 100–104 (QFGRR) lie on the Cytoplasmic side of the membrane. A helical membrane pass occupies residues 105-125 (LSLLIIYNFFFLVSILTSITH). Residues 126–129 (HFHT) are Extracellular-facing. The chain crosses the membrane as a helical span at residues 130–150 (ILFARLLSGFGIGLVTVSVPM). Residues 151–165 (YISEMTHKDKKGAYG) are Cytoplasmic-facing. The chain crosses the membrane as a helical span at residues 166-186 (VMHQLFITFGIFVAVMLGLAM). Position 169 (Q169) interacts with alpha-D-glucose. Q169 serves as a coordination point for beta-D-glucose. Over 187 to 207 (GEGPKADSTEPLTSFAKLWWR) the chain is Extracellular. A helical transmembrane segment spans residues 208–228 (LMFLFPSVISLIGILALVVFF). At 229–293 (KEETPYFLFE…SALKIPSYRY (65 aa)) the chain is on the cytoplasmic side. A helical membrane pass occupies residues 294–314 (VIILGCLLSGLQQFTGINVLV). Positions 305, 306, and 311 each coordinate alpha-D-glucose. Residue Q305 coordinates beta-D-glucose. N311 serves as a coordination point for beta-D-glucose. Residues 315 to 331 (SNSNELYKEFLDSHLIT) lie on the Extracellular side of the membrane. The helical transmembrane segment at 332–352 (ILSVVMTAVNFLMTFPAIYIV) threads the bilayer. N341 contributes to the beta-D-glucose binding site. The Cytoplasmic segment spans residues 353–358 (EKLGRK). Residues 359–379 (TLLLWGCVGVLVAYLPTAIAN) form a helical membrane-spanning segment. Residues 380 to 392 (EINRNSNFVKILS) lie on the Extracellular side of the membrane. A helical transmembrane segment spans residues 393 to 413 (IVATFVMIISFAVSYGPVLWI). W412 provides a ligand contact to alpha-D-glucose. Over 414-429 (YLHEMFPSEIKDSAAS) the chain is Cytoplasmic. The chain crosses the membrane as a helical span at residues 430 to 450 (LASLVNWVCAIIVVFPSDIII). Residues 451–455 (KKSPS) are Extracellular-facing. A helical membrane pass occupies residues 456-476 (ILFIVFSVMSILTFFFIFFFI). Residues 477–504 (KETKGGEIGTSPYITMEERQKHMTKSVV) are Cytoplasmic-facing.

It belongs to the major facilitator superfamily. Sugar transporter (TC 2.A.1.1) family. In terms of assembly, homodimer.

Its subcellular location is the cell membrane. The enzyme catalyses D-glucose(out) = D-glucose(in). It catalyses the reaction D-fructose(out) = D-fructose(in). The catalysed reaction is D-galactose(in) = D-galactose(out). It carries out the reaction D-mannose(out) = D-mannose(in). The enzyme catalyses D-glucosamine(out) = D-glucosamine(in). It catalyses the reaction D-xylose(out) = D-xylose(in). Inhibited by cytochalasin B. Inhibited by compound 3361 (3-O-((undec-10-en)-1-yl)-D-glucose). Inhibited by compound HTI-1. Its function is as follows. Sodium-independent facilitative hexose transporter. Can transport D-glucose and D-fructose. Can transport D-mannose, D-galactose, D-xylose and D-glucosamine. The sequence is that of Hexose transporter 1 from Plasmodium falciparum (isolate 3D7).